Reading from the N-terminus, the 306-residue chain is Ubiquitin-conjugating enzyme E2Q-like protein CG4502 (306 aa).

Positions His-18 to Gly-77 are disordered. 2 stretches are compositionally biased toward low complexity: residues Asn-22–Asn-41 and Asn-53–Gly-77. The UBC core domain occupies Ile-138–Val-299. Cys-234 functions as the Glycyl thioester intermediate in the catalytic mechanism.

The protein belongs to the ubiquitin-conjugating enzyme family.

It carries out the reaction S-ubiquitinyl-[E1 ubiquitin-activating enzyme]-L-cysteine + [E2 ubiquitin-conjugating enzyme]-L-cysteine = [E1 ubiquitin-activating enzyme]-L-cysteine + S-ubiquitinyl-[E2 ubiquitin-conjugating enzyme]-L-cysteine.. It participates in protein modification; protein ubiquitination. Catalyzes the covalent attachment of ubiquitin to other proteins. The sequence is that of Ubiquitin-conjugating enzyme E2Q-like protein CG4502 from Drosophila melanogaster (Fruit fly).